We begin with the raw amino-acid sequence, 1014 residues long: EMILIN-1-A (1014 aa).

The signal sequence occupies residues 1 to 27; sequence MALYFVYLSTLLALILLGDNWAAGTYA. Positions 53 to 128 constitute an EMI domain; it reads HRNWCAYVVT…HGYSGDDCSD (76 aa). Intrachain disulfides connect Cys-57-Cys-118, Cys-84-Cys-89, and Cys-117-Cys-126. Disordered stretches follow at residues 125 to 150 and 811 to 869; these read DCSD…SDSD and QDFT…ANVP. Over residues 134 to 150 the composition is skewed to basic and acidic residues; the sequence is HDSRARPTGEEGRSDSD. Residues 145-179 adopt a coiled-coil conformation; the sequence is GRSDSDRIRQLEEQIQSLNKNLHNLQKKIYEESQR. A Collagen-like domain is found at 815–865; sequence GPPGLPGPQGEKGSKGPPGPRGPLGKEGPQGRVGPVGPPGLRGEQGPPGKD. Low complexity predominate over residues 840-856; the sequence is KEGPQGRVGPVGPPGLR. Residues 866-1012 form the C1q domain; that stretch reads ANVPRLSFSA…GMLLYEESED (147 aa).

It localises to the secreted. The protein localises to the extracellular space. Its subcellular location is the extracellular matrix. In terms of biological role, may be responsible for anchoring smooth muscle cells to elastic fibers, and may be involved not only in the formation of the elastic fiber, but also in the processes that regulate vessel assembly. Has cell adhesive capacity. This chain is EMILIN-1-A, found in Danio rerio (Zebrafish).